Here is a 448-residue protein sequence, read N- to C-terminus: Probable glycine dehydrogenase (decarboxylating) subunit 1 (448 aa).

It belongs to the GcvP family. N-terminal subunit subfamily. In terms of assembly, the glycine cleavage system is composed of four proteins: P, T, L and H. In this organism, the P 'protein' is a heterodimer of two subunits.

It catalyses the reaction N(6)-[(R)-lipoyl]-L-lysyl-[glycine-cleavage complex H protein] + glycine + H(+) = N(6)-[(R)-S(8)-aminomethyldihydrolipoyl]-L-lysyl-[glycine-cleavage complex H protein] + CO2. In terms of biological role, the glycine cleavage system catalyzes the degradation of glycine. The P protein binds the alpha-amino group of glycine through its pyridoxal phosphate cofactor; CO(2) is released and the remaining methylamine moiety is then transferred to the lipoamide cofactor of the H protein. This is Probable glycine dehydrogenase (decarboxylating) subunit 1 from Listeria monocytogenes serovar 1/2a (strain ATCC BAA-679 / EGD-e).